We begin with the raw amino-acid sequence, 428 residues long: Glutamyl-tRNA reductase (428 aa).

Substrate contacts are provided by residues threonine 55–arginine 58, serine 114, glutamate 119–glutamine 121, and glutamine 125. Cysteine 56 functions as the Nucleophile in the catalytic mechanism. Residue glycine 194 to isoleucine 199 coordinates NADP(+).

It belongs to the glutamyl-tRNA reductase family. Homodimer.

It carries out the reaction (S)-4-amino-5-oxopentanoate + tRNA(Glu) + NADP(+) = L-glutamyl-tRNA(Glu) + NADPH + H(+). It participates in porphyrin-containing compound metabolism; protoporphyrin-IX biosynthesis; 5-aminolevulinate from L-glutamyl-tRNA(Glu): step 1/2. Functionally, catalyzes the NADPH-dependent reduction of glutamyl-tRNA(Glu) to glutamate 1-semialdehyde (GSA). This is Glutamyl-tRNA reductase from Paraburkholderia xenovorans (strain LB400).